The sequence spans 130 residues: Ribosome-binding factor A (130 aa).

Residues 111 to 130 (RDLDDVGPGATSSDEDAEQR) form a disordered region.

This sequence belongs to the RbfA family. In terms of assembly, monomer. Binds 30S ribosomal subunits, but not 50S ribosomal subunits or 70S ribosomes.

It is found in the cytoplasm. In terms of biological role, one of several proteins that assist in the late maturation steps of the functional core of the 30S ribosomal subunit. Associates with free 30S ribosomal subunits (but not with 30S subunits that are part of 70S ribosomes or polysomes). Required for efficient processing of 16S rRNA. May interact with the 5'-terminal helix region of 16S rRNA. In Xanthomonas oryzae pv. oryzae (strain MAFF 311018), this protein is Ribosome-binding factor A.